The chain runs to 291 residues: Protein/nucleic acid deglycase HchA (291 aa).

Residues 1-18 (MSNERDTSRTPTPDHAEH) show a composition bias toward basic and acidic residues. Positions 1–20 (MSNERDTSRTPTPDHAEHNA) are disordered. The Nucleophile role is filled by Cys188.

Belongs to the peptidase C56 family. HchA subfamily.

The protein resides in the cytoplasm. The catalysed reaction is N(omega)-(1-hydroxy-2-oxopropyl)-L-arginyl-[protein] + H2O = lactate + L-arginyl-[protein] + H(+). It carries out the reaction N(6)-(1-hydroxy-2-oxopropyl)-L-lysyl-[protein] + H2O = lactate + L-lysyl-[protein] + H(+). The enzyme catalyses S-(1-hydroxy-2-oxopropyl)-L-cysteinyl-[protein] + H2O = lactate + L-cysteinyl-[protein] + H(+). It catalyses the reaction N(omega)-(1-hydroxy-2-oxoethyl)-L-arginyl-[protein] + H2O = L-arginyl-[protein] + glycolate + H(+). The catalysed reaction is N(6)-(1-hydroxy-2-oxoethyl)-L-lysyl-[protein] + H2O = glycolate + L-lysyl-[protein] + H(+). It carries out the reaction S-(1-hydroxy-2-oxoethyl)-L-cysteinyl-[protein] + H2O = glycolate + L-cysteinyl-[protein] + H(+). The enzyme catalyses N(2)-(1-hydroxy-2-oxopropyl)-dGTP + H2O = lactate + dGTP + H(+). It catalyses the reaction N(2)-(1-hydroxy-2-oxopropyl)-GTP + H2O = lactate + GTP + H(+). The catalysed reaction is N(2)-(1-hydroxy-2-oxopropyl)-GDP + H2O = lactate + GDP + H(+). It carries out the reaction N(2)-(1-hydroxy-2-oxopropyl)-GMP + H2O = lactate + GMP + H(+). The enzyme catalyses N(2)-(1-hydroxy-2-oxoethyl)-dGTP + H2O = dGTP + glycolate + H(+). It catalyses the reaction N(2)-(1-hydroxy-2-oxoethyl)-GTP + H2O = glycolate + GTP + H(+). The catalysed reaction is N(2)-(1-hydroxy-2-oxoethyl)-GDP + H2O = glycolate + GDP + H(+). It carries out the reaction N(2)-(1-hydroxy-2-oxoethyl)-GMP + H2O = glycolate + GMP + H(+). The enzyme catalyses an N(2)-(1-hydroxy-2-oxopropyl)-guanosine in RNA + H2O = a guanosine in RNA + lactate + H(+). It catalyses the reaction an N(2)-(1-hydroxy-2-oxopropyl)-2'-deoxyguanosine in DNA + H2O = a 2'-deoxyguanosine in DNA + lactate + H(+). The catalysed reaction is an N(2)-(1-hydroxy-2-oxoethyl)-guanosine in RNA + H2O = a guanosine in RNA + glycolate + H(+). It carries out the reaction an N(2)-(1-hydroxy-2-oxoethyl)-2'-deoxyguanosine in DNA + H2O = a 2'-deoxyguanosine in DNA + glycolate + H(+). Its function is as follows. Protein and nucleotide deglycase that catalyzes the deglycation of the Maillard adducts formed between amino groups of proteins or nucleotides and reactive carbonyl groups of glyoxals. Thus, functions as a protein deglycase that repairs methylglyoxal- and glyoxal-glycated proteins, and releases repaired proteins and lactate or glycolate, respectively. Deglycates cysteine, arginine and lysine residues in proteins, and thus reactivates these proteins by reversing glycation by glyoxals. Acts on early glycation intermediates (hemithioacetals and aminocarbinols), preventing the formation of Schiff bases and advanced glycation endproducts (AGE). Also functions as a nucleotide deglycase able to repair glycated guanine in the free nucleotide pool (GTP, GDP, GMP, dGTP) and in DNA and RNA. Is thus involved in a major nucleotide repair system named guanine glycation repair (GG repair), dedicated to reversing methylglyoxal and glyoxal damage via nucleotide sanitization and direct nucleic acid repair. Plays an important role in protecting cells from carbonyl stress. This chain is Protein/nucleic acid deglycase HchA, found in Pseudomonas aeruginosa (strain LESB58).